The primary structure comprises 492 residues: N-succinylglutamate 5-semialdehyde dehydrogenase (492 aa).

220–225 is a binding site for NAD(+); the sequence is GSSTTG. Active-site residues include glutamate 243 and cysteine 277.

Belongs to the aldehyde dehydrogenase family. AstD subfamily.

It catalyses the reaction N-succinyl-L-glutamate 5-semialdehyde + NAD(+) + H2O = N-succinyl-L-glutamate + NADH + 2 H(+). Its pathway is amino-acid degradation; L-arginine degradation via AST pathway; L-glutamate and succinate from L-arginine: step 4/5. In terms of biological role, catalyzes the NAD-dependent reduction of succinylglutamate semialdehyde into succinylglutamate. In Klebsiella pneumoniae subsp. pneumoniae (strain ATCC 700721 / MGH 78578), this protein is N-succinylglutamate 5-semialdehyde dehydrogenase.